Consider the following 485-residue polypeptide: ATP-dependent rRNA helicase RRP3 (485 aa).

The segment covering Met1–Ala10 has biased composition (basic residues). The interval Met1 to Glu55 is disordered. Low complexity predominate over residues Ser20 to Gln32. The Q motif signature appears at Lys59–Ala87. The Helicase ATP-binding domain occupies Ile90–Val261. Ala103–Thr110 lines the ATP pocket. Residues Asp209–Asp212 carry the DEAD box motif. The 149-residue stretch at Tyr285–Met433 folds into the Helicase C-terminal domain. The segment covering Glu449 to Gly458 has biased composition (basic and acidic residues). The interval Glu449–Gly485 is disordered. Positions Lys465–Lys474 are enriched in basic residues. The segment covering Arg475–Gly485 has biased composition (basic and acidic residues).

Belongs to the DEAD box helicase family. DDX47/RRP3 subfamily. In terms of assembly, interacts with the SSU processome.

Its subcellular location is the nucleus. It catalyses the reaction ATP + H2O = ADP + phosphate + H(+). Functionally, ATP-dependent rRNA helicase required for pre-ribosomal RNA processing. Involved in the maturation of the 35S-pre-rRNA and to its cleavage to mature 18S rRNA. This Ajellomyces capsulatus (strain NAm1 / WU24) (Darling's disease fungus) protein is ATP-dependent rRNA helicase RRP3.